A 556-amino-acid polypeptide reads, in one-letter code: Polyphenol oxidase 2 (556 aa).

6 residues coordinate Cu cation: His-57, His-81, His-90, His-250, His-254, and His-282. The segment at residues 79-81 (CTH) is a cross-link (2'-(S-cysteinyl)-histidine (Cys-His)). His-254 provides a ligand contact to substrate. Positions 379–556 (SKPSSGARNT…FDDVAVHVIN (178 aa)) are cleaved as a propeptide — removed in mature form.

This sequence belongs to the tyrosinase family. As to quaternary structure, heterotetramer. Cu(2+) is required as a cofactor. Post-translationally, the C-ter is probably cleaved after Gly-378 since the mature active protein is smaller than the protein encoded by the gene.

It catalyses the reaction 2 L-dopa + O2 = 2 L-dopaquinone + 2 H2O. The catalysed reaction is L-tyrosine + O2 = L-dopaquinone + H2O. Functionally, copper-containing oxidase that catalyzes both the o-hydroxylation of monophenols and the subsequent oxidation of the resulting o-diphenols into reactive o-quinones, which evolve spontaneously to produce intermediates, which associate in dark brown pigments. Involved in the initial step of melanin synthesis. Melanins constitute a mechanism of defense and resistance to stress such as UV radiations, free radicals, gamma rays, dehydratation and extreme temperatures, and contribute to the fungal cell-wall resistance against hydrolytic enzymes in avoiding cellular lysis. Fungal pigments are also involved in the formation and stability of spores. This Agaricus bisporus (White button mushroom) protein is Polyphenol oxidase 2 (PPO2).